Here is a 477-residue protein sequence, read N- to C-terminus: UDP-N-acetylmuramate--L-alanine ligase (477 aa).

122–128 lines the ATP pocket; that stretch reads GTHGKTT.

It belongs to the MurCDEF family.

The protein resides in the cytoplasm. It catalyses the reaction UDP-N-acetyl-alpha-D-muramate + L-alanine + ATP = UDP-N-acetyl-alpha-D-muramoyl-L-alanine + ADP + phosphate + H(+). It participates in cell wall biogenesis; peptidoglycan biosynthesis. In terms of biological role, cell wall formation. This Xanthomonas campestris pv. campestris (strain 8004) protein is UDP-N-acetylmuramate--L-alanine ligase.